A 426-amino-acid polypeptide reads, in one-letter code: Glutamate-1-semialdehyde 2,1-aminomutase (426 aa).

The residue at position 265 (lysine 265) is an N6-(pyridoxal phosphate)lysine.

Belongs to the class-III pyridoxal-phosphate-dependent aminotransferase family. HemL subfamily. Homodimer. Requires pyridoxal 5'-phosphate as cofactor.

The protein resides in the cytoplasm. It catalyses the reaction (S)-4-amino-5-oxopentanoate = 5-aminolevulinate. It participates in porphyrin-containing compound metabolism; protoporphyrin-IX biosynthesis; 5-aminolevulinate from L-glutamyl-tRNA(Glu): step 2/2. In Shigella sonnei (strain Ss046), this protein is Glutamate-1-semialdehyde 2,1-aminomutase.